The primary structure comprises 110 residues: Endoribonuclease SymE (110 aa).

The 46-residue stretch at 29–74 (SRYPDYTRIPALTMKGQWLEAAGFATGTEVDVRVMNGCIVLTAQQP) folds into the SpoVT-AbrB domain.

Belongs to the SymE family.

The protein localises to the cytoplasm. Functionally, involved in the degradation and recycling of damaged RNA. It is itself a target for degradation by the ATP-dependent protease Lon. The polypeptide is Endoribonuclease SymE (Salmonella heidelberg (strain SL476)).